Here is a 185-residue protein sequence, read N- to C-terminus: Ribosome-recycling factor (185 aa).

It belongs to the RRF family.

It is found in the cytoplasm. Functionally, responsible for the release of ribosomes from messenger RNA at the termination of protein biosynthesis. May increase the efficiency of translation by recycling ribosomes from one round of translation to another. In Thermotoga petrophila (strain ATCC BAA-488 / DSM 13995 / JCM 10881 / RKU-1), this protein is Ribosome-recycling factor.